Consider the following 305-residue polypeptide: Tyrosine recombinase XerC (305 aa).

The Core-binding (CB) domain maps to 4–95; sequence TQIQELIIKW…AIKNFYKFLE (92 aa). In terms of domain architecture, Tyr recombinase spans 116 to 298; the sequence is LLPKALSEEE…SIKHLETAYV (183 aa). Residues Arg159, Lys182, His250, Arg253, and His276 contribute to the active site. The active-site O-(3'-phospho-DNA)-tyrosine intermediate is Tyr285.

Belongs to the 'phage' integrase family. XerC subfamily. In terms of assembly, forms a cyclic heterotetrameric complex composed of two molecules of XerC and two molecules of XerD.

The protein localises to the cytoplasm. Its function is as follows. Site-specific tyrosine recombinase, which acts by catalyzing the cutting and rejoining of the recombining DNA molecules. The XerC-XerD complex is essential to convert dimers of the bacterial chromosome into monomers to permit their segregation at cell division. It also contributes to the segregational stability of plasmids. This is Tyrosine recombinase XerC from Rickettsia bellii (strain RML369-C).